A 396-amino-acid chain; its full sequence is Elongation factor Tu (396 aa).

In terms of domain architecture, tr-type G spans 10–205 (KTHANIGTIG…AVDDYIPTPE (196 aa)). Residues 19–26 (GHVDHGKT) form a G1 region. 19 to 26 (GHVDHGKT) is a binding site for GTP. Threonine 26 is a Mg(2+) binding site. The segment at 61-65 (GITIS) is G2. Residues 82-85 (DCPG) form a G3 region. Residues 82-86 (DCPGH) and 137-140 (NKCD) each bind GTP. The G4 stretch occupies residues 137-140 (NKCD). The segment at 175–177 (SAL) is G5.

It belongs to the TRAFAC class translation factor GTPase superfamily. Classic translation factor GTPase family. EF-Tu/EF-1A subfamily. Monomer.

It is found in the cytoplasm. The enzyme catalyses GTP + H2O = GDP + phosphate + H(+). In terms of biological role, GTP hydrolase that promotes the GTP-dependent binding of aminoacyl-tRNA to the A-site of ribosomes during protein biosynthesis. This chain is Elongation factor Tu, found in Halalkalibacterium halodurans (strain ATCC BAA-125 / DSM 18197 / FERM 7344 / JCM 9153 / C-125) (Bacillus halodurans).